Reading from the N-terminus, the 202-residue chain is Transcriptional regulator SdrP (202 aa).

The region spanning 117–189 is the HTH crp-type domain; it reads QRLKNRMAAA…YGKIQLLDLK (73 aa). Positions 149-168 form a DNA-binding region, H-T-H motif; it reads HDELAAAVGSVRETVTKVIG.

Homodimer.

In terms of biological role, activates transcription. The consensus DNA-binding site of this transcriptional regulator is 5'-WWGTGAN(5-7)ACACWW-3' in which W is A or T and N is G, A, T or C. Regulated genes include those encoding proteins involved in nutrient and energy supply, redox control and polyadenylation of mRNA. Also regulates genes involved in oxidative stress response such as genes encoding manganese superoxide dismutase and catalase, and genes encoding a protein involved in nucleotide excision repair of damaged DNA and putative proteins involved in redox control, protein degradation and transcriptional regulation. This chain is Transcriptional regulator SdrP, found in Thermus thermophilus (strain ATCC 27634 / DSM 579 / HB8).